The primary structure comprises 165 residues: Putative protein FAM86C1P (165 aa).

This sequence belongs to the class I-like SAM-binding methyltransferase superfamily. EEF2KMT family. As to quaternary structure, interacts with EEF2KMT.

This chain is Putative protein FAM86C1P, found in Homo sapiens (Human).